The chain runs to 255 residues: Protein patched homolog 2 (255 aa).

At 1 to 197 (SLLQGGSAYL…LNDIMKSFSD (197 aa)) the chain is on the extracellular side. N-linked (GlcNAc...) asparagine glycans are attached at residues Asn-147 and Asn-175. A helical transmembrane segment spans residues 198 to 218 (VSVIRVAGGYLLMLAYACVTM). Residues 199 to 255 (SVIRVAGGYLLMLAYACVTMLRWDCTKSQGAVGLAGVLLVALSVASGLGLCSLLGIS) form the SSD domain. The Cytoplasmic portion of the chain corresponds to 219–227 (LRWDCTKSQ). Residues 228 to 248 (GAVGLAGVLLVALSVASGLGL) form a helical membrane-spanning segment. At 249 to 255 (CSLLGIS) the chain is on the extracellular side.

The protein belongs to the patched family. As to expression, in the eye, detected in neural retina, iris, retinal pigment epithelium, but not in lens.

Its subcellular location is the membrane. May act as a receptor for sonic hedgehog (SHH). This Cynops pyrrhogaster (Japanese fire-bellied newt) protein is Protein patched homolog 2 (PTC2).